A 256-amino-acid polypeptide reads, in one-letter code: 14-3-3-like protein GF14-C (256 aa).

The protein belongs to the 14-3-3 family. As to quaternary structure, may form a complex with the transcriptional activator VP1 and the bZIP transcription factor EMBP1. Expressed in seedlings, internodes and panicles.

Its subcellular location is the cytoplasm. It localises to the nucleus. In terms of biological role, is associated with a DNA binding complex that binds to the G box, a well-characterized cis-acting DNA regulatory element found in plant genes. This Oryza sativa subsp. japonica (Rice) protein is 14-3-3-like protein GF14-C (GF14C).